A 580-amino-acid chain; its full sequence is Keratin, type II cytoskeletal 5 (580 aa).

The segment at 1–161 (MSRQSSVSFR…DPTIQRVRTE (161 aa)) is head. Residues S5, S8, S16, and S21 each carry the phosphoserine modification. A Phosphothreonine; by CDK1 modification is found at T24. 8 positions are modified to phosphoserine: S26, S36, S47, S61, S68, S72, S75, and S79. Residue T145 is modified to Phosphothreonine; by CDK1. At T160 the chain carries Phosphothreonine; by AURKB. A coil 1A region spans residues 162-197 (EREQIKTLNNKFASFIDKVRFLEQQNKVLDTKWALL). One can recognise an IF rod domain in the interval 162 to 475 (EREQIKTLNN…KLLEGEECRL (314 aa)). The linker 1 stretch occupies residues 198–216 (QEQGTKTIKQNLDPLFEQY). Residues 217-309 (INNLRRQLDG…FFDAELSQMQ (93 aa)) form a coil 1B region. The linker 12 stretch occupies residues 310-332 (THVSDTSVVLSMDNNRSLDLDSI). Residues 333–471 (IAEVKAQYED…ATYRKLLEGE (139 aa)) form a coil 2 region. Positions 472 to 580 (ECRLSGEGVG…TSSSRRSFKS (109 aa)) are tail. Residue R526 is modified to Omega-N-methylarginine. Residues 555-580 (FGSGGGSGSSVKFVSTTSSSRRSFKS) form a disordered region. Positions 563–580 (SSVKFVSTTSSSRRSFKS) are enriched in low complexity.

It belongs to the intermediate filament family. As to quaternary structure, heterodimer of a type I and a type II keratin. Heterodimer with type I keratin KRT25 leading to the formation of keratin intermediate filament (KIF) network. Forms a heterodimer (via 2B domains) with KRT14 (via 2B domains). Interacts with PLEC isoform 1C, when in a heterodimer with KRT14. Interacts with TCHP. Interacts with EPPK1. Interacts with AMELX. Interacts with PKP1 (via N-terminus) and PKP2. In terms of processing, phosphorylated by CDK1, AURKB and Rho-kinase, phosphorylation is regulated by the cell cycle. Thr-24 phosphorylation, mediated by CDK1, peaks during prometaphase or metaphase cells with phosphorylated filamentous structures evident throughout the cytoplasm during early mitosis. CDK1 phosphorylates Thr-24 in mitotic cells at the site of injury. O-glycosylated. Expressed in the corneal epithelium (at protein level). Expressed in the epidermis of the ear (at protein level). Expressed in the basal and spinous layers of the skin at birth (at protein level).

The protein resides in the cytoplasm. Its function is as follows. Required for the formation of keratin intermediate filaments in the basal epidermis and maintenance of the skin barrier in response to mechanical stress. Regulates the recruitment of Langerhans cells to the epidermis, potentially by modulation of the abundance of macrophage chemotactic cytokines, macrophage inflammatory cytokines and CTNND1 localization in keratinocytes. The sequence is that of Keratin, type II cytoskeletal 5 from Mus musculus (Mouse).